Reading from the N-terminus, the 132-residue chain is Translation initiation factor 5A (132 aa).

K37 bears the Hypusine mark.

The protein belongs to the eIF-5A family.

The protein localises to the cytoplasm. In terms of biological role, functions by promoting the formation of the first peptide bond. This Methanocaldococcus jannaschii (strain ATCC 43067 / DSM 2661 / JAL-1 / JCM 10045 / NBRC 100440) (Methanococcus jannaschii) protein is Translation initiation factor 5A (eif5a).